We begin with the raw amino-acid sequence, 521 residues long: Bifunctional purine biosynthesis protein PurH (521 aa).

One can recognise an MGS-like domain in the interval 1 to 147 (MAKITRALIS…KNNADVTVVV (147 aa)).

The protein belongs to the PurH family.

It catalyses the reaction (6R)-10-formyltetrahydrofolate + 5-amino-1-(5-phospho-beta-D-ribosyl)imidazole-4-carboxamide = 5-formamido-1-(5-phospho-D-ribosyl)imidazole-4-carboxamide + (6S)-5,6,7,8-tetrahydrofolate. The catalysed reaction is IMP + H2O = 5-formamido-1-(5-phospho-D-ribosyl)imidazole-4-carboxamide. It participates in purine metabolism; IMP biosynthesis via de novo pathway; 5-formamido-1-(5-phospho-D-ribosyl)imidazole-4-carboxamide from 5-amino-1-(5-phospho-D-ribosyl)imidazole-4-carboxamide (10-formyl THF route): step 1/1. The protein operates within purine metabolism; IMP biosynthesis via de novo pathway; IMP from 5-formamido-1-(5-phospho-D-ribosyl)imidazole-4-carboxamide: step 1/1. This chain is Bifunctional purine biosynthesis protein PurH, found in Geotalea uraniireducens (strain Rf4) (Geobacter uraniireducens).